Reading from the N-terminus, the 132-residue chain is MAAPKSAARKPRKKEKKNIAVGQAHIKSTFNNTIVSITDTTGAVLSWASSGGVGFKGSRKSTPYAAQLAAESAARQAQEHGMKKVDVFVKGPGSGRETAIRSLQAAGLEVGSINDVTPQAHNGCRPPKRRRV.

This sequence belongs to the universal ribosomal protein uS11 family. In terms of assembly, part of the 30S ribosomal subunit. Interacts with proteins S7 and S18. Binds to IF-3.

Functionally, located on the platform of the 30S subunit, it bridges several disparate RNA helices of the 16S rRNA. Forms part of the Shine-Dalgarno cleft in the 70S ribosome. This is Small ribosomal subunit protein uS11 from Leifsonia xyli subsp. xyli (strain CTCB07).